We begin with the raw amino-acid sequence, 449 residues long: Probable glycine dehydrogenase (decarboxylating) subunit 1 (449 aa).

The protein belongs to the GcvP family. N-terminal subunit subfamily. In terms of assembly, the glycine cleavage system is composed of four proteins: P, T, L and H. In this organism, the P 'protein' is a heterodimer of two subunits.

It catalyses the reaction N(6)-[(R)-lipoyl]-L-lysyl-[glycine-cleavage complex H protein] + glycine + H(+) = N(6)-[(R)-S(8)-aminomethyldihydrolipoyl]-L-lysyl-[glycine-cleavage complex H protein] + CO2. Functionally, the glycine cleavage system catalyzes the degradation of glycine. The P protein binds the alpha-amino group of glycine through its pyridoxal phosphate cofactor; CO(2) is released and the remaining methylamine moiety is then transferred to the lipoamide cofactor of the H protein. This Pyrococcus horikoshii (strain ATCC 700860 / DSM 12428 / JCM 9974 / NBRC 100139 / OT-3) protein is Probable glycine dehydrogenase (decarboxylating) subunit 1.